The sequence spans 41 residues: Large ribosomal subunit protein bL36B (41 aa).

This sequence belongs to the bacterial ribosomal protein bL36 family.

The sequence is that of Large ribosomal subunit protein bL36B from Vibrio campbellii (strain ATCC BAA-1116).